A 65-amino-acid polypeptide reads, in one-letter code: Prokaryotic ubiquitin-like protein Pup (65 aa).

The segment covering 1–13 (MAQEQKQPRKSSE) has biased composition (basic and acidic residues). The segment at 1–34 (MAQEQKQPRKSSEADEAVEAVAETDVSERKEALD) is disordered. An ARC ATPase binding region spans residues 21 to 59 (VAETDVSERKEALDSDVDDILDEIDDVLETNAEDFVKSF). Positions 25–49 (DVSERKEALDSDVDDILDEIDDVLE) form a coiled coil. Residue E65 forms an Isoglutamyl lysine isopeptide (Glu-Lys) (interchain with K-? in acceptor proteins) linkage.

This sequence belongs to the prokaryotic ubiquitin-like protein family. In terms of assembly, strongly interacts with the proteasome-associated ATPase ARC through a hydrophobic interface; the interacting region of Pup lies in its C-terminal half. There is one Pup binding site per ARC hexamer ring.

It functions in the pathway protein degradation; proteasomal Pup-dependent pathway. Its function is as follows. Protein modifier that is covalently attached to lysine residues of substrate proteins, thereby targeting them for proteasomal degradation. The tagging system is termed pupylation. This Nocardioides sp. (strain ATCC BAA-499 / JS614) protein is Prokaryotic ubiquitin-like protein Pup.